The sequence spans 308 residues: KH domain-containing protein At4g26480 (308 aa).

Residues 1-26 (MMMMTSLGGGAGGGGGGGGSGGGRFV) are disordered. Gly residues predominate over residues 7 to 24 (LGGGAGGGGGGGGSGGGR). The KH domain occupies 165-232 (DIPVDKYPNY…EHLNEPLHIL (68 aa)). A disordered region spans residues 284-308 (EEGSPMSGSISPYNSLGMKRAKTRG). Phosphoserine is present on Ser-294.

It localises to the nucleus. The sequence is that of KH domain-containing protein At4g26480 from Arabidopsis thaliana (Mouse-ear cress).